The sequence spans 726 residues: Catalase-peroxidase (726 aa).

The disordered stretch occupies residues 1–33 (MSTSDDIHNTTATGKCPFHQGGHDQSAGAGTTT). A cross-link (tryptophyl-tyrosyl-methioninium (Trp-Tyr) (with M-252)) is located at residues 105–226 (WHGAGTYRSI…LGATEMGLIY (122 aa)). Catalysis depends on His-106, which acts as the Proton acceptor. A cross-link (tryptophyl-tyrosyl-methioninium (Tyr-Met) (with W-105)) is located at residues 226–252 (YVNPEGPDHSGEPLSAAAAIRATFGNM). His-267 lines the heme b pocket.

This sequence belongs to the peroxidase family. Peroxidase/catalase subfamily. Homodimer or homotetramer. Heme b is required as a cofactor. Formation of the three residue Trp-Tyr-Met cross-link is important for the catalase, but not the peroxidase activity of the enzyme.

It carries out the reaction H2O2 + AH2 = A + 2 H2O. It catalyses the reaction 2 H2O2 = O2 + 2 H2O. Its function is as follows. Bifunctional enzyme with both catalase and broad-spectrum peroxidase activity. The polypeptide is Catalase-peroxidase (Shigella flexneri).